We begin with the raw amino-acid sequence, 651 residues long: ATP-dependent RNA helicase MRH4, mitochondrial (651 aa).

The transit peptide at 1-61 (MLRSSLGSVC…SNARQATRRE (61 aa)) directs the protein to the mitochondrion. A compositionally biased stretch (polar residues) spans 45–56 (SSLSFSTSNARQ). The interval 45–137 (SSLSFSTSNA…GGKKLGRDGK (93 aa)) is disordered. Composition is skewed to basic and acidic residues over residues 72 to 83 (RVGRSTARDGDK) and 124 to 137 (NGREGGKKLGRDGK). The short motif at 167 to 200 (DSFDQFDLLPQVKDAVLNEALKGMLDIKPTPVQR) is the Q motif element. Positions 210-241 (TTGARSRWRTKSKPADSGSEAASPDAPPPPRE) are disordered. Residues 224–233 (ADSGSEAASP) show a composition bias toward low complexity. Residues 234–445 (DAPPPPREEF…ASRFPNMRRI (212 aa)) enclose the Helicase ATP-binding domain. 247-254 (AETGSGKT) contacts ATP. The short motif at 392–395 (DEAD) is the DEAD box element. The region spanning 494–651 (PVKGQVDVRR…ESMFMGQALV (158 aa)) is the Helicase C-terminal domain.

The protein belongs to the DEAD box helicase family. MRH4 subfamily.

The protein localises to the mitochondrion. It carries out the reaction ATP + H2O = ADP + phosphate + H(+). Functionally, ATP-binding RNA helicase involved in mitochondrial RNA metabolism. Required for maintenance of mitochondrial DNA. In Pyricularia oryzae (strain 70-15 / ATCC MYA-4617 / FGSC 8958) (Rice blast fungus), this protein is ATP-dependent RNA helicase MRH4, mitochondrial (MRH4).